The following is a 426-amino-acid chain: Pregnancy-specific beta-1-glycoprotein 9 (426 aa).

An N-terminal signal peptide occupies residues 1 to 34; sequence MGPLPAPSCTQRITWKGLLLTASLLNFWNPPTTA. An Ig-like V-type domain is found at 35–144; that stretch reads EVTIEAQPPK…IRHFTFTLYL (110 aa). Asn-104 and Asn-111 each carry an N-linked (GlcNAc...) asparagine glycan. A Cell attachment site motif is present at residues 127–129; that stretch reads RGD. Ig-like C2-type domains lie at 147–234, 242–326, and 335–410; these read PKPY…VTLN, PYIT…PVIL, and PRIY…KSMT. 3 cysteine pairs are disulfide-bonded: Cys-169-Cys-217, Cys-262-Cys-310, and Cys-354-Cys-394. N-linked (GlcNAc...) asparagine glycans are attached at residues Asn-199, Asn-268, Asn-303, and Asn-387.

This sequence belongs to the immunoglobulin superfamily. CEA family. In terms of assembly, interacts with latency-associated peptide; leading to TGFB1 activation.

It is found in the secreted. Binds to the small latent transforming growth factor-beta complex, consisting of the N-terminal TGFB1 latency-associated peptide (LAP) and the mature form of TGFB1, thereby leading to the activation of TGFB1. The activation of TGFB1 leads to stimulation of naive CD4(+) T-cells to increase FoxP3 expression and to an increase in the number of FoxP3(+) regulatory T-cells. Induces the differentiation of a suppressive CD4(+)LAP(+)FoxP3(-) T-cell subset. Induces the secretion of TGFB1 in macrophages, but not in activated CD4(+) T-cells. May reduce the expression of several pro-inflammatory cytokines and chemokines by CD4(+) T-cells, including IL2 and IL6. In Homo sapiens (Human), this protein is Pregnancy-specific beta-1-glycoprotein 9 (PSG9).